A 151-amino-acid chain; its full sequence is Transcriptional regulator MraZ (151 aa).

SpoVT-AbrB domains follow at residues 5–52 (ANAI…PLDE) and 81–124 (AVDL…DEDA).

It belongs to the MraZ family. Forms oligomers.

The protein localises to the cytoplasm. It localises to the nucleoid. This chain is Transcriptional regulator MraZ, found in Pseudomonas fluorescens (strain ATCC BAA-477 / NRRL B-23932 / Pf-5).